Reading from the N-terminus, the 467-residue chain is ATP synthase subunit beta (467 aa).

156-163 (GGAGVGKT) lines the ATP pocket.

This sequence belongs to the ATPase alpha/beta chains family. F-type ATPases have 2 components, CF(1) - the catalytic core - and CF(0) - the membrane proton channel. CF(1) has five subunits: alpha(3), beta(3), gamma(1), delta(1), epsilon(1). CF(0) has three main subunits: a(1), b(2) and c(9-12). The alpha and beta chains form an alternating ring which encloses part of the gamma chain. CF(1) is attached to CF(0) by a central stalk formed by the gamma and epsilon chains, while a peripheral stalk is formed by the delta and b chains.

It localises to the cell inner membrane. The catalysed reaction is ATP + H2O + 4 H(+)(in) = ADP + phosphate + 5 H(+)(out). Produces ATP from ADP in the presence of a proton gradient across the membrane. The catalytic sites are hosted primarily by the beta subunits. This Cupriavidus pinatubonensis (strain JMP 134 / LMG 1197) (Cupriavidus necator (strain JMP 134)) protein is ATP synthase subunit beta.